The sequence spans 355 residues: Peptide chain release factor 1 (355 aa).

At Gln-230 the chain carries N5-methylglutamine.

This sequence belongs to the prokaryotic/mitochondrial release factor family. In terms of processing, methylated by PrmC. Methylation increases the termination efficiency of RF1.

The protein localises to the cytoplasm. In terms of biological role, peptide chain release factor 1 directs the termination of translation in response to the peptide chain termination codons UAG and UAA. This chain is Peptide chain release factor 1, found in Geotalea uraniireducens (strain Rf4) (Geobacter uraniireducens).